The following is a 135-amino-acid chain: Galectin-1 (135 aa).

Ala2 carries the N-acetylalanine modification. The Galectin domain occupies 4-135; the sequence is GLVASNLNLK…DFKIKCVAFE (132 aa). 3 positions are modified to N6-acetyllysine: Lys13, Lys19, and Lys29. Ser30 is subject to Phosphoserine. Residues 45-49, His53, Asn62, and 69-72 each bind a beta-D-galactoside; these read HFNPR and WGTE. N6-acetyllysine; alternate is present on Lys108. The residue at position 108 (Lys108) is an N6-succinyllysine; alternate. N6-acetyllysine is present on Lys128.

In terms of assembly, homodimer. Binds LGALS3BP. Interacts with CD2, CD3, CD4, CD6, CD7, CD43, ALCAM and CD45. Interacts with laminin (via poly-N-acetyllactosamine). Interacts with SUSD2. Interacts with cargo receptor TMED10; the interaction mediates the translocation from the cytoplasm into the ERGIC (endoplasmic reticulum-Golgi intermediate compartment) and thereby secretion. Interacts with CD69.

The protein localises to the secreted. The protein resides in the extracellular space. It localises to the extracellular matrix. Its subcellular location is the cytoplasm. Its function is as follows. Lectin that binds beta-galactoside and a wide array of complex carbohydrates. Plays a role in regulating apoptosis, cell proliferation and cell differentiation. Inhibits CD45 protein phosphatase activity and therefore the dephosphorylation of Lyn kinase. Strong inducer of T-cell apoptosis. Plays a negative role in Th17 cell differentiation via activation of the receptor CD69. In Rattus norvegicus (Rat), this protein is Galectin-1 (Lgals1).